Reading from the N-terminus, the 109-residue chain is Tyrosine-protein phosphatase 16 (109 aa).

The region spanning 1-109 (WRMVTEHTST…RIKTQKPIVV (109 aa)) is the Tyrosine-protein phosphatase domain. Substrate is bound at residue D81.

The protein belongs to the protein-tyrosine phosphatase family.

It catalyses the reaction O-phospho-L-tyrosyl-[protein] + H2O = L-tyrosyl-[protein] + phosphate. This is Tyrosine-protein phosphatase 16 (STY-16) from Styela plicata (Wrinkled sea squirt).